A 318-amino-acid polypeptide reads, in one-letter code: Aldo-keto reductase family 1 member C21 (318 aa).

An NADP(+)-binding site is contributed by 20–24 (GFGTA). Substrate is bound at residue Lys31. Asp50 lines the NADP(+) pocket. Tyr55 serves as the catalytic Proton donor. His117 is a substrate binding site. Residues 166-167 (SN), Gln190, 216-224 (YGVLGTQRY), and 270-280 (TSLKEERIKEN) contribute to the NADP(+) site.

It belongs to the aldo/keto reductase family. In terms of assembly, monomer.

It localises to the cytoplasm. The enzyme catalyses androsterone + NADP(+) = 5alpha-androstan-3,17-dione + NADPH + H(+). It catalyses the reaction androsterone + NAD(+) = 5alpha-androstan-3,17-dione + NADH + H(+). In terms of biological role, NADP-dependent 17-alpha-hydroxysteroid dehydrogenase that converts 5-alpha-androstane-3,17-dione into androsterone. Has lower 3-alpha-hydroxysteroid dehydrogenase activity. Has broad substrate specificity and acts on various 17-alpha-hydroxysteroids, 17-ketosteroids, 3-alpha hydroxysteroids and 3-ketosteroids. Reduction of keto groups is strictly stereoselective. Reduction of 17-ketosteroids yields only 17-alpha-hydroxysteroids. Likewise, reduction of 3-ketosteroids yields only 3-alpha-hydroxysteroids. The protein is Aldo-keto reductase family 1 member C21 (Akr1c21) of Rattus norvegicus (Rat).